Reading from the N-terminus, the 305-residue chain is UDP-3-O-acyl-N-acetylglucosamine deacetylase (305 aa).

Residues H78, H237, and D241 each contribute to the Zn(2+) site. H264 serves as the catalytic Proton donor.

It belongs to the LpxC family. Zn(2+) is required as a cofactor.

It catalyses the reaction a UDP-3-O-[(3R)-3-hydroxyacyl]-N-acetyl-alpha-D-glucosamine + H2O = a UDP-3-O-[(3R)-3-hydroxyacyl]-alpha-D-glucosamine + acetate. It participates in glycolipid biosynthesis; lipid IV(A) biosynthesis; lipid IV(A) from (3R)-3-hydroxytetradecanoyl-[acyl-carrier-protein] and UDP-N-acetyl-alpha-D-glucosamine: step 2/6. Catalyzes the hydrolysis of UDP-3-O-myristoyl-N-acetylglucosamine to form UDP-3-O-myristoylglucosamine and acetate, the committed step in lipid A biosynthesis. The sequence is that of UDP-3-O-acyl-N-acetylglucosamine deacetylase from Burkholderia pseudomallei (strain 668).